Here is an 87-residue protein sequence, read N- to C-terminus: Bradykinin-potentiating peptide NDBP12 (87 aa).

The N-terminal stretch at 1 to 22 (MNKRVLLVIFFVTLLVADEVNS) is a signal peptide. Residues 64–75 (PAEAPAPAAAAP) are compositionally biased toward low complexity. Residues 64-87 (PAEAPAPAAAAPEEPPVEQRRRRR) form a disordered region.

It belongs to the non-disulfide-bridged peptide (NDBP) superfamily. Long chain multifunctional peptide (group 2) family. Expressed by the venom gland.

The protein localises to the secreted. Its function is as follows. Inhibits angiotensin-converting enzyme (ACE), but does not serve as substrate for the enzyme. Potentiates bradykinin (BK) on the isolated guinea pig ileum as well as the isolated rat uterus for contraction. Also potentiates in vivo the depressor effect of BK on arterial blood pressure in the normotensive anesthetized rat. In Lychas mucronatus (Chinese swimming scorpion), this protein is Bradykinin-potentiating peptide NDBP12.